Consider the following 372-residue polypeptide: MKDIFYMKKAIKLAKKGSLTTSPNPNVGCIIVNNNIIVGSGWHKKTGMKHAEIYALKTSGEKAKGATAYITLEPCSHFGKTPPCCVALTKYGISRVVIATLDPNPKVSGNGVKWLKKHGILVTIGTLSKESIKINKGFFQRMTTGIPWIKLKLASSIDGRTALNNGKSKWITSDKARHDVQHVREKSDAIISSSETILFDNPLLTVRNTNNNDNNQKLLKHSKTFLKQPIRVIIDSKNRITPSHKCIKQPGLLFLIRIHSDNNIWPSHIKQIILNNKSKKIDLIDLVKMLAKYQINNILIEAGPSLSSSFLKLNIINELIIYIAPKILGNYAKPLFFLENYSNLSDVPQFKFEKITQIGKDLKLILTKHNSS.

The 122-residue stretch at 1–122 folds into the CMP/dCMP-type deaminase domain; it reads MKDIFYMKKA…KWLKKHGILV (122 aa). A deaminase region spans residues 1-145; sequence MKDIFYMKKA…KGFFQRMTTG (145 aa). His-50 lines the Zn(2+) pocket. Glu-52 functions as the Proton donor in the catalytic mechanism. Zn(2+) is bound by residues Cys-75 and Cys-84. A reductase region spans residues 146–372; sequence IPWIKLKLAS…KLILTKHNSS (227 aa). Residue Ala-154 coordinates NADP(+). Position 168 (Ser-168) interacts with substrate. Trp-170 provides a ligand contact to NADP(+). Arg-184 contacts substrate. The NADP(+) site is built by Thr-196 and Asp-200. Substrate contacts are provided by Leu-204 and Arg-207. Ser-236 contacts NADP(+). A substrate-binding site is contributed by Glu-301. NADP(+) is bound at residue 303 to 309; sequence GPSLSSS.

It in the N-terminal section; belongs to the cytidine and deoxycytidylate deaminase family. This sequence in the C-terminal section; belongs to the HTP reductase family. Zn(2+) serves as cofactor.

The catalysed reaction is 2,5-diamino-6-hydroxy-4-(5-phosphoribosylamino)-pyrimidine + H2O + H(+) = 5-amino-6-(5-phospho-D-ribosylamino)uracil + NH4(+). It catalyses the reaction 5-amino-6-(5-phospho-D-ribitylamino)uracil + NADP(+) = 5-amino-6-(5-phospho-D-ribosylamino)uracil + NADPH + H(+). It participates in cofactor biosynthesis; riboflavin biosynthesis; 5-amino-6-(D-ribitylamino)uracil from GTP: step 2/4. It functions in the pathway cofactor biosynthesis; riboflavin biosynthesis; 5-amino-6-(D-ribitylamino)uracil from GTP: step 3/4. Functionally, converts 2,5-diamino-6-(ribosylamino)-4(3h)-pyrimidinone 5'-phosphate into 5-amino-6-(ribosylamino)-2,4(1h,3h)-pyrimidinedione 5'-phosphate. The chain is Riboflavin biosynthesis protein RibD (ribD) from Buchnera aphidicola subsp. Baizongia pistaciae (strain Bp).